The following is a 505-amino-acid chain: Deoxyguanosinetriphosphate triphosphohydrolase (505 aa).

One can recognise an HD domain in the interval 66–273; the sequence is RLTHSMEVQQ…MEAADDISYC (208 aa).

This sequence belongs to the dGTPase family. Type 1 subfamily. Homotetramer. The cofactor is Mg(2+).

The enzyme catalyses dGTP + H2O = 2'-deoxyguanosine + triphosphate + H(+). Functionally, dGTPase preferentially hydrolyzes dGTP over the other canonical NTPs. This Salmonella typhimurium (strain LT2 / SGSC1412 / ATCC 700720) protein is Deoxyguanosinetriphosphate triphosphohydrolase.